The chain runs to 106 residues: PAT complex subunit Asterix (106 aa).

A disordered region spans residues 1–29 (MSTNNMSDPRRPNKVLRYKPPPSECNPAL). Residue Ser2 is modified to N-acetylserine. Topologically, residues 2-32 (STNNMSDPRRPNKVLRYKPPPSECNPALDDP) are cytoplasmic. The chain crosses the membrane as a helical span at residues 33–51 (TPDYMNLLGMIFSMCGLML). A topological domain (lumenal) is located at residue Lys52. A helical transmembrane segment spans residues 53 to 70 (LKWCAWVAVYCSFISFAN). Residues 71 to 74 (SRSS) are Cytoplasmic-facing. Residues 75-95 (EDTKQMMSSFMLSISAVVMSY) form a helical membrane-spanning segment. Topologically, residues 96 to 106 (LQNPQPMTPPW) are lumenal.

This sequence belongs to the Asterix family. In terms of assembly, component of the PAT complex, composed of WDR83OS/Asterix and CCDC47. The PAT complex is part of the multi-pass translocon (MPT) complex, composed of three subcomplexes, the GEL complex (composed of RAB5IF/OPTI and TMCO1), the BOS complex (composed of NCLN/Nicalin, NOMO1 and TMEM147) and the PAT complex (composed of WDR83OS/Asterix and CCDC47). The MPT complex associates with the SEC61 complex.

The protein localises to the endoplasmic reticulum membrane. Functionally, component of the multi-pass translocon (MPT) complex that mediates insertion of multi-pass membrane proteins into the lipid bilayer of membranes. The MPT complex takes over after the SEC61 complex: following membrane insertion of the first few transmembrane segments of proteins by the SEC61 complex, the MPT complex occludes the lateral gate of the SEC61 complex to promote insertion of subsequent transmembrane regions. Within the MPT complex, the PAT subcomplex sequesters any highly polar regions in the transmembrane domains away from the non-polar membrane environment until they can be buried in the interior of the fully assembled protein. Within the PAT subcomplex, WDR83OS/Asterix binds to and redirects the substrate to a location behind the SEC61 complex. In Canis lupus familiaris (Dog), this protein is PAT complex subunit Asterix (WDR83OS).